The chain runs to 52 residues: Thiocillin (52 aa).

Positions 1-38 are excised as a propeptide; the sequence is MSEIKKALNTLEIEDFDAIEMVDVDAMPENEALEIMGA. The segment at residues 39–40 is a cross-link (thiazole-4-carboxylic acid (Ser-Cys)); it reads SC. Positions 39–47 form a cross-link, pyridine-2,5-dicarboxylic acid (Ser-Cys) (with S-48); that stretch reads SCTTCVCTC. The pyridine-2,5-dicarboxylic acid (Ser-Ser) (with C-47) cross-link spans 39–48; the sequence is SCTTCVCTCS. Residue Thr-42 is modified to (Z)-2,3-didehydrobutyrine. Positions 42–43 form a cross-link, thiazole-4-carboxylic acid (Thr-Cys); the sequence is TC. The residue at position 44 (Val-44) is a 3-hydroxyvaline (Val); partial. Residues 44–45 constitute a cross-link (thiazole-4-carboxylic acid (Val-Cys)); sequence VC. The residue at position 46 (Thr-46) is an O-methylthreonine; partial. A cross-link (thiazole-4-carboxylic acid (Thr-Cys)) is located at residues 46–47; sequence TC. Positions 48-49 form a cross-link, thiazole-4-carboxylic acid (Ser-Cys); that stretch reads SC. Positions 49 to 50 form a cross-link, thiazole-4-carboxylic acid (Cys-Cys); that stretch reads CC. Residue Thr-51 is modified to (Z)-2,3-didehydrobutyrine. At Thr-52 the chain carries 1-amino-2-propanone; alternate. Thr-52 bears the Decarboxylated threonine; alternate mark.

The protein belongs to the thiocillin family. Post-translationally, maturation of thiazole and oxazole containing antibiotics involves the enzymatic condensation of a Cys, Ser or Thr with the alpha-carbonyl of the preceding amino acid to form a thioether or ether bond, then dehydration to form a double bond with the alpha-amino nitrogen. Thiazoline or oxazoline ring are dehydrogenated to form thiazole or oxazole rings. Maturation of pyridinyl containing antibiotics involves the cross-linking of a Ser and a Cys-Ser pair usually separated by 7 or 8 residues along the peptide chain. The Ser residues are dehydrated to didehydroalanines, then bonded between their beta carbons. The alpha carbonyl of the Cys condenses with alpha carbon of the first Ser to form a pyridinyl ring. The ring may be multiply dehydrogenated to form a pyridine ring with loss of the amino nitrogen of the first Ser. In terms of processing, the 8 possible modification isomers, differing in the presence of modifications at three positions, have been characterized in PubMed:19196969. Val-44 is modified to 3-hydroxyvaline in forms thiocillin I, thiocillin II, YM-266183, and YM-266184. Thr-46 is modified to O-methylthreonine in forms thiocillin II, thiocillin III, thiocillin IV, and YM-266184. Thr-52 is decarboxylated to (R)-1-aminopropan-2-ol in forms micrococcin P1, thiocillin I, thiocillin II, and thiocillin III. Thr-52 is decarboxylated and oxidized to 1-amino-2-propanone in forms micrococcin P2, YM-266183, YM-266184. and thiocillin IV. Post-translationally, the structure of 2,3-didehydrobutyrines is not discussed in PubMed:19196969. However, in Fig. 3 the residues are diagrammed as Z-isomers.

It is found in the secreted. Functionally, has bacteriocidal activity against Gram-positive bacteria, but not against Gram-negative bacteria. Inhibits bacterial protein biosynthesis by acting on the elongation factor Tu (EF-Tu). In Bacillus cereus (strain ATCC 14579 / DSM 31 / CCUG 7414 / JCM 2152 / NBRC 15305 / NCIMB 9373 / NCTC 2599 / NRRL B-3711), this protein is Thiocillin.